The sequence spans 492 residues: Ribose import ATP-binding protein RbsA (492 aa).

ABC transporter domains lie at 3–239 (IDMR…VGRK) and 238–492 (RKLE…TGGK). Position 35–42 (35–42 (GENGAGKS)) interacts with ATP.

The protein belongs to the ABC transporter superfamily. Ribose importer (TC 3.A.1.2.1) family. In terms of assembly, the complex is composed of an ATP-binding protein (RbsA), two transmembrane proteins (RbsC) and a solute-binding protein (RbsB).

The protein resides in the cell membrane. The catalysed reaction is D-ribose(out) + ATP + H2O = D-ribose(in) + ADP + phosphate + H(+). In terms of biological role, part of the ABC transporter complex RbsABC involved in ribose import. Responsible for energy coupling to the transport system. The chain is Ribose import ATP-binding protein RbsA from Streptococcus agalactiae serotype Ia (strain ATCC 27591 / A909 / CDC SS700).